Here is a 748-residue protein sequence, read N- to C-terminus: Chondroadherin-like protein (748 aa).

Positions 1-29 are cleaved as a signal peptide; that stretch reads MERPQSSIWVFMLLLFMVLLQSPAWHVAA. The LRRNT 1 domain maps to 30-61; it reads QRCPQTCVCDNSRRHVTCRHQNLTEVPNTIPE. Residue Asn-51 is glycosylated (N-linked (GlcNAc...) asparagine). LRR repeat units follow at residues 85 to 107, 108 to 131, 132 to 155, 156 to 179, 181 to 203, 204 to 227, 229 to 252, 253 to 275, and 276 to 299; these read PHLT…AFRG, LGRL…ALDG, LGSL…TFGA, LGSL…AFQG, LRTR…ALAG, LPAL…ALSQ, RSLA…GLAL, PGLR…AFAH, and CPRL…QVPG. In terms of domain architecture, LRRCT 1 spans 309 to 357; the sequence is NPLWCACHARPLLEWLVRARVRSDGACRGPRRLRGEALDTLRPSDLRCP. Residues 352 to 389 are disordered; it reads SDLRCPGDAAAGDGDGDEDEDRPAGPRAPPLRSPHGEA. An LRRNT 2 domain is found at 394–428; sequence PCPPACACVAETRHSTCDGRGLQAVPRGFPNDTQL. A disulfide bridge connects residues Cys-395 and Cys-410. 10 LRR repeats span residues 423–446, 448–470, 471–494, 496–518, 519–542, 544–566, 567–590, 591–614, 616–639, and 641–665; these read PNDT…AFPG, RHLV…ALAG, LDRL…ALEG, PNLG…ALRA, LPTL…DLAG, RALR…ALGP, AREL…ALEG, LPAL…AFQP, GRSL…AFSG, and GKGL…GLSG. A glycan (N-linked (GlcNAc...) asparagine) is linked at Asn-625. Residues 674 to 722 form the LRRCT 2 domain; it reads NPFHCDCQLLPLHRWLTGLNLRVGATCATPPSVRGQKVKVAAPVFEACP. 2 disulfides stabilise this stretch: Cys-678/Cys-721 and Cys-680/Cys-700. A disordered region spans residues 728 to 748; sequence KAKRTPTSRGSARRTPSLSRH. Over residues 734–748 the composition is skewed to polar residues; the sequence is TSRGSARRTPSLSRH.

Belongs to the small leucine-rich proteoglycan (SLRP) family. SLRP class IV subfamily. Associates with collagen and binds to collagen fibrils. As to expression, expressed in cartilage, including articular knee cartilage, where it localizes to the extracellular space in the area immediately surrounding the chondrocytes, not detected in any other tissues (at protein level).

The protein resides in the secreted. The protein localises to the extracellular space. It localises to the extracellular matrix. Potential negative modulator of chondrocyte differentiation. Inhibits collagen fibrillogenesis in vitro. May influence chondrocyte's differentiation by acting on its cellular collagenous microenvironment. The protein is Chondroadherin-like protein (Chadl) of Mus musculus (Mouse).